The sequence spans 709 residues: Nucleobase-ascorbate transporter 11 (709 aa).

Disordered stretches follow at residues 1 to 28 (MDSG…YGER) and 58 to 167 (TGFV…SEDG). A compositionally biased stretch (gly residues) spans 15 to 25 (KGNGSGGGNGY). A compositionally biased stretch (polar residues) spans 65 to 74 (SGETSTSTRT). Composition is skewed to basic and acidic residues over residues 75-89 (KFGE…KGRD), 108-132 (NRPE…RLNR), and 142-151 (EGGKINKDLE). Transmembrane regions (helical) follow at residues 196-216 (YLSL…AMDG), 222-242 (ASVI…HCYF), 246-266 (LPLV…VINS), 288-308 (IIVG…SLLL), 310-330 (FINP…FFSY), 336-356 (GTCV…TLYL), 369-389 (IYAV…LTVG), 454-474 (IIMI…YHSA), 532-552 (LVIG…GAIL), 555-575 (IPQA…VSLG), 590-610 (ITIV…FQQY), and 642-662 (FAMN…AFIL).

This sequence belongs to the nucleobase:cation symporter-2 (NCS2) (TC 2.A.40) family. Expressed in leaf primordia and vasculature of pedicels, rosette leaves, sepals, carpels and siliques. Expressed in the root central cylinder.

Its subcellular location is the membrane. This chain is Nucleobase-ascorbate transporter 11 (NAT11), found in Arabidopsis thaliana (Mouse-ear cress).